A 561-amino-acid chain; its full sequence is 2-succinyl-5-enolpyruvyl-6-hydroxy-3-cyclohexene-1-carboxylate synthase (561 aa).

This sequence belongs to the TPP enzyme family. MenD subfamily. In terms of assembly, homodimer. Requires Mg(2+) as cofactor. It depends on Mn(2+) as a cofactor. Thiamine diphosphate serves as cofactor.

The catalysed reaction is isochorismate + 2-oxoglutarate + H(+) = 5-enolpyruvoyl-6-hydroxy-2-succinyl-cyclohex-3-ene-1-carboxylate + CO2. It functions in the pathway quinol/quinone metabolism; 1,4-dihydroxy-2-naphthoate biosynthesis; 1,4-dihydroxy-2-naphthoate from chorismate: step 2/7. Its pathway is cofactor biosynthesis; phylloquinone biosynthesis. Functionally, catalyzes the thiamine diphosphate-dependent decarboxylation of 2-oxoglutarate and the subsequent addition of the resulting succinic semialdehyde-thiamine pyrophosphate anion to isochorismate to yield 2-succinyl-5-enolpyruvyl-6-hydroxy-3-cyclohexene-1-carboxylate (SEPHCHC). The polypeptide is 2-succinyl-5-enolpyruvyl-6-hydroxy-3-cyclohexene-1-carboxylate synthase (Synechococcus sp. (strain CC9605)).